The chain runs to 211 residues: Troponin I, cardiac muscle (211 aa).

A disordered region spans residues 1–24 (MADESSDAAGEPQPAPAPVRRRSS). A2 bears the N-acetylalanine mark. 2 positions are modified to phosphoserine: S5 and S6. Phosphoserine; by PKA and PKD/PRKD1 occurs at positions 23 and 24. Position 27 is a phosphotyrosine (Y27). A Phosphothreonine; by STK4/MST1 modification is found at T32. Residues 33-80 (EPHAKKKSKISASRKLQLKTLMLQIAKQEMEREAEERRGEKGRVLRTR) form an involved in binding TNC region. A phosphoserine; by PKC/PRKCE mark is found at S43 and S45. T52 carries the post-translational modification Phosphothreonine; by STK4/MST1. T79 is modified (phosphothreonine). Phosphothreonine; by STK4/MST1 occurs at positions 130 and 144. An involved in binding TNC and actin region spans residues 130–151 (TQKIYDLRGKFKRPTLRRVRIS). S151, S167, and S200 each carry phosphoserine.

The protein belongs to the troponin I family. In terms of assembly, interacts with TRIM63. Binds to actin and tropomyosin. Interacts with STK4/MST1. Post-translationally, phosphorylated at Ser-23 and Ser-24 by PRKD1; phosphorylation reduces myofilament calcium sensitivity. Phosphorylated preferentially at Thr-32. Phosphorylation by STK4/MST1 alters its binding affinity to TNNC1 (cardiac Tn-C) and TNNT2 (cardiac Tn-T). Phosphorylated at Ser-43 and Ser-45 by PRKCE; phosphorylation increases myocardium contractile dysfunction.

Troponin I is the inhibitory subunit of troponin, the thin filament regulatory complex which confers calcium-sensitivity to striated muscle actomyosin ATPase activity. This is Troponin I, cardiac muscle (Tnni3) from Mus musculus (Mouse).